Here is a 741-residue protein sequence, read N- to C-terminus: MVKSRKISILLAVAMLVSIMIPTTAFAGPTKAPTKDGTSYKDLFLELYGKIKDPKNGYFSPDEGIPYHSIETLIVEAPDYGHVTTSEAFSYYVWLEAMYGNLTGNWSGVETAWKVMEDWIIPDSTEQPGMSSYNPNSPATYADEYEDPSYYPSELKFDTVRVGSDPVHNDLVSAYGPNMYLMHWLMDVDNWYGFGTGTRATFINTFQRGEQESTWETIPHPSIEEFKYGGPNGFLDLFTKDRSYAKQWRYTNAPDAEGRAIQAVYWANKWAKEQGKGSAVASVVSKAAKMGDFLRNDMFDKYFMKIGAQDKTPATGYDSAHYLMAWYTAWGGGIGASWAWKIGCSHAHFGYQNPFQGWVSATQSDFAPKSSNGKRDWTTSYKRQLEFYQWLQSAEGGIAGGATNSWNGRYEKYPAGTSTFYGMAYVPHPVYADPGSNQWFGFQAWSMQRVMEYYLETGDSSVKNLIKKWVDWVMSEIKLYDDGTFAIPSDLEWSGQPDTWTGTYTGNPNLHVRVTSYGTDLGVAGSLANALATYAAATERWEGKLDTKARDMAAELVNRAWYNFYCSEGKGVVTEEARADYKRFFEQEVYVPAGWSGTMPNGDKIQPGIKFIDIRTKYRQDPYYDIVYQAYLRGEAPVLNYHRFWHEVDLAVAMGVLATYFPDMTYKVPGTPSTKLYGDVNDDGKVNSTDAVALKRYVLRSGISINTDNADLNEDGRVNSTDLGILKRYILKEIDTLPYKN.

The N-terminal stretch at 1–27 is a signal peptide; it reads MVKSRKISILLAVAMLVSIMIPTTAFA. Glu-76 serves as a coordination point for substrate. The active-site Proton donor is Glu-87. Residues Thr-140, Asn-204, Asp-241, Gln-247, and 251–252 contribute to the substrate site; that span reads TN. Asp-255 (nucleophile) is an active-site residue. Substrate-binding positions include 301–302, 326–327, Tyr-421, Asp-520, and 645–646; these read KY, WY, and WH. The Dockerin domain maps to 673 to 739; the sequence is STKLYGDVND…ILKEIDTLPY (67 aa). Ca(2+)-binding residues include Asp-679, Asn-681, Asp-683, Gly-684, Lys-685, Asp-690, Asp-711, Leu-712, Asn-713, Asp-715, Arg-717, and Asp-722.

This sequence belongs to the glycosyl hydrolase 48 (cellulase L) family.

The protein resides in the secreted. The catalysed reaction is Hydrolysis of (1-&gt;4)-beta-D-glucosidic linkages in cellulose and similar substrates, releasing cellobiose from the reducing ends of the chains.. Its activity is regulated as follows. Inhibited by cellobiose and lactose, but not by glucose. In terms of biological role, this enzyme catalyzes the exohydrolysis of 1,4-beta-glucosidic linkages in cellulose with a preference for amorphous or crystalline cellulose over carboxymethyl cellulose. The protein is Cellulose 1,4-beta-cellobiosidase (reducing end) CelS (celS) of Acetivibrio thermocellus (strain ATCC 27405 / DSM 1237 / JCM 9322 / NBRC 103400 / NCIMB 10682 / NRRL B-4536 / VPI 7372) (Clostridium thermocellum).